Consider the following 732-residue polypeptide: Cullin-3A (732 aa).

A Cullin neddylation domain is found at 662–724 (DRKPQIEAAI…RDFLERDSTD (63 aa)). Lys676 is covalently cross-linked (Glycyl lysine isopeptide (Lys-Gly) (interchain with G-Cter in NEDD8)).

This sequence belongs to the cullin family. As to quaternary structure, interacts with CSN2 and RBX1A. Interacts with BTB/POZ domain-containing proteins BPM1, BPM2, BPM3, BPM6, BT1, BT2, BT3, BT5, AT1G01640, AT1G21780 and AT5G48510. Interacts with SR1IP1. Interacts with NPR3 and NPR4. Binds to NPR1; this interaction requires NPR3 and NPR4. Neddylated. Deneddylated via its interaction with the COP9 signalosome (CSN) complex.

In terms of biological role, component of the cullin-RING ubiquitin ligases (CRL), or CUL3-RBX1-BTB protein E3 ligase complexes which mediate the ubiquitination and subsequent proteasomal degradation of target proteins. The functional specificity of the CRL complex depends on the BTB domain-containing protein as the substrate recognition component. Involved in embryo pattern formation and endosperm development. Required for the normal division and organization of the root stem cells and columella root cap cells. Regulates primary root growth by an unknown pathway, but in an ethylene-dependent manner. Functions in distal root patterning, by an ethylene-independent mechanism. Functionally redundant with CUL3B. The protein is Cullin-3A of Arabidopsis thaliana (Mouse-ear cress).